The chain runs to 631 residues: MSTTTLTRREQRAKAQHFIDTLEGTAFPNSKRIYVTGSQHDIRVPMREIQLSPTLIGGSKDNPQFEENEAVPVYDTSGPYGDPEVAINVQQGLAKLRQPWIEARADVETLADRSSAYTRERLTDEGLDALRFTGLLTPKRAKAGHRVTQLHYARQGIVTPEMEFIAIRENMGRERIRSEVLRHQHPGMSFGARLPENITPEFVRDEVAAGRAIIPANINHPESEPMIIGRNFLVKVNANIGNSAVTSSIEEEVEKLVWSTRWGADTVMDLSTGRYIHETREWILRNSPVPIGTVPIYQALEKVNGIAEDLTWEAFRDTLLEQAEQGVDYFTIHAGVLLRYVPMTAKRLTGIVSRGGSIMAKWCLSHHKENFLFEHFREICEICAAYDVSLSLGDGLRPGSIQDANDEAQFSELHTLGELTKIAWEYDVQVMIEGPGHVPMHMIQRNMTEELESCHEAPFYTLGPLTTDIAPGYDHFTSGIGAAMIGWFGCAMLCYVTPKEHLGLPNKEDVKQGLITYKIAAHAADLAKGHPGAQIRDNAMSKARFEFRWEDQFNLALDPFTARAYHDETLPQESGKVAHFCSMCGPKFCSMKISQEVRDYAAAQTIEVGMANMSENFRAKGGEIYLKREEV.

Residues N239, M268, Y297, H333, 353–355 (SRG), 394–397 (DGLR), and E433 contribute to the substrate site. H437 contributes to the Zn(2+) binding site. Y460 is a substrate binding site. H501 contributes to the Zn(2+) binding site. Positions 581, 584, and 589 each coordinate [4Fe-4S] cluster.

This sequence belongs to the ThiC family. As to quaternary structure, homodimer. Requires [4Fe-4S] cluster as cofactor.

The enzyme catalyses 5-amino-1-(5-phospho-beta-D-ribosyl)imidazole + S-adenosyl-L-methionine = 4-amino-2-methyl-5-(phosphooxymethyl)pyrimidine + CO + 5'-deoxyadenosine + formate + L-methionine + 3 H(+). It functions in the pathway cofactor biosynthesis; thiamine diphosphate biosynthesis. Its function is as follows. Catalyzes the synthesis of the hydroxymethylpyrimidine phosphate (HMP-P) moiety of thiamine from aminoimidazole ribotide (AIR) in a radical S-adenosyl-L-methionine (SAM)-dependent reaction. The sequence is that of Phosphomethylpyrimidine synthase from Salmonella agona (strain SL483).